The sequence spans 149 residues: Putative inactive group IIC secretory phospholipase A2 (149 aa).

The signal sequence occupies residues 1-18 (MKVIAILTLLLFCSPTHS). Disulfide bonds link cysteine 44–cysteine 142, cysteine 77–cysteine 107, cysteine 95–cysteine 112, and cysteine 97–cysteine 105. Tyrosine 45, glycine 47, and glycine 49 together coordinate Ca(2+).

The protein belongs to the phospholipase A2 family. Ca(2+) serves as cofactor.

It is found in the secreted. Inactive phospholipase. The protein is Putative inactive group IIC secretory phospholipase A2 (PLA2G2C) of Homo sapiens (Human).